Consider the following 581-residue polypeptide: Activating signal cointegrator 1 (581 aa).

N-acetylalanine is present on Ala2. A disordered region spans residues 100–121 (DQLKRSRRKGRNKQEVPAFPEP). The segment at 167–219 (GRHPCDCLGQKHKLINNCLVCGRIVCEQEGSGPCLFCGSLVCTNEEQDILQRD) adopts a C4-type zinc-finger fold. The segment at 200–300 (CLFCGSLVCT…ASDSNQWLSK (101 aa)) is mediates interaction with DDRGK1. Ser276 is subject to Phosphoserine. At Tyr289 the chain carries Phosphotyrosine. The tract at residues 300–400 (KVEREMLQKR…WVDNTGSTPQ (101 aa)) is mediates interaction with UFL1. Glycyl lysine isopeptide (Lys-Gly) (interchain with G-Cter in UFM1) cross-links involve residues Lys324 and Lys334. Polar residues predominate over residues 390 to 406 (QWVDNTGSTPQKKTSLS). A disordered region spans residues 390 to 410 (QWVDNTGSTPQKKTSLSAGPR). Residues 437 to 531 (LSMHQPWASL…FQEQFPDISQ (95 aa)) form the ASCH domain.

Interacts with the thyroid hormone receptor/TR (via the ligand-binding domain); this interaction requires the presence of thyroid hormone. Interacts with the androgen receptor/AR; in an androgen, testosterone and dihydrotestosterone-dependent manner. Interacts with ESR1 (estrogen ligand-bound); competes with UFSP2. Interacts with UFSP2; competes with ligand-bound ESR1. Interacts with DDRGK1 and UFL1; the interaction with DDRGK1 is direct. Interacts with NCOA1. Interacts with EP300. Part of the ASC-1 complex, that contains TRIP4, ASCC1, ASCC2 and ASCC3. Identified in the RQT (ribosome quality control trigger) complex, that contains ASCC2, ASCC3 and TRIP4. Interacts with NEK6. Interacts with CSRP1. Interacts with ZCCHC4. Post-translationally, phosphorylated by NEK6. In terms of processing, polyufmylated by the UFM1-conjugating system composed of the enzymes UBA5, UFC1 and UFL1. Deufmylated by the protease UFSP2. Ufmylation of TRIP4 is promoted by ligand-bound nuclear receptors that compete with UFSP2 for interaction with TRIP4. Nuclear receptors-induced ufmylation promotes the recruitment of additional transcriptional coactivators like EP300 and NCOA1 and therefore the assembly of a coactivator complex facilitating nuclear receptor-mediated transcription. As to expression, ubiquitously expressed. Expressed in the spinal cord, brain, paraspinal ganglia, thyroid, and submandibular glands. Expressed at low level in all the muscles (at protein level) but with higher expression in axial than in limb muscles.

It is found in the nucleus. Its subcellular location is the cytoplasm. The protein resides in the cytosol. It localises to the cytoskeleton. The protein localises to the microtubule organizing center. It is found in the centrosome. Functionally, transcription coactivator which associates with nuclear receptors, transcriptional coactivators including EP300, CREBBP and NCOA1, and basal transcription factors like TBP and TFIIA to facilitate nuclear receptors-mediated transcription. May thereby play an important role in establishing distinct coactivator complexes under different cellular conditions. Plays a role in thyroid hormone receptor and estrogen receptor transactivation. Also involved in androgen receptor transactivation. Plays a pivotal role in the transactivation of NF-kappa-B, SRF and AP1. Acts as a mediator of transrepression between nuclear receptor and either AP1 or NF-kappa-B. May play a role in the development of neuromuscular junction. May play a role in late myogenic differentiation. Also functions as part of the RQC trigger (RQT) complex that activates the ribosome quality control (RQC) pathway, a pathway that degrades nascent peptide chains during problematic translation. This chain is Activating signal cointegrator 1, found in Mus musculus (Mouse).